The chain runs to 253 residues: MICOS complex subunit mic25 (253 aa).

The disordered stretch occupies residues 1–89 (MGGSESTGRK…GAHKPTAAGV (89 aa)). G2 carries N-myristoyl glycine lipidation. Residues 28–44 (RLSDEVVNRMKDSDLPS) show a composition bias toward basic and acidic residues. A compositionally biased stretch (low complexity) spans 48–64 (STSAASGTASAPAAFPS). Positions 94-178 (AEEDLYRRYE…EQLSSIEKKN (85 aa)) form a coiled coil. Residues 206–248 (DPVCMNLQADILKCYSENKQERLNCSNLAKEYRKCVSAAQKNL) form the CHCH domain. 2 short sequence motifs (cx9C motif) span residues 209 to 219 (CMNLQADILKC) and 230 to 240 (CSNLAKEYRKC). Disulfide bonds link C209–C240 and C219–C230.

It belongs to the MICOS complex subunit Mic19 family. Metazoan Mic25 subfamily. Component of the mitochondrial contact site and cristae organizing system (MICOS) complex (also known as MINOS or MitOS complex).

The protein localises to the mitochondrion inner membrane. Its function is as follows. Component of the MICOS complex, a large protein complex of the mitochondrial inner membrane that plays crucial roles in the maintenance of crista junctions, inner membrane architecture, and formation of contact sites to the outer membrane. This is MICOS complex subunit mic25 (chchd6) from Xenopus tropicalis (Western clawed frog).